The primary structure comprises 842 residues: Axin-1 (842 aa).

A disordered region spans residues 1–75 (MSVKGKGFPL…LDLGYEPEGS (75 aa)). A compositionally biased stretch (polar residues) spans 34-46 (TTDQRPFSHTYYS). Positions 88–211 (SLHSLLDDQD…LKSDIYLEYT (124 aa)) constitute an RGS domain. Disordered regions lie at residues 218-242 (PKNY…PTLN), 277-297 (SHCA…PGTW), 316-344 (TSAN…DGIP), 414-451 (KRVR…NSRY), 482-532 (KTPG…AKVD), 543-562 (YHHV…DGES), 615-637 (KKAD…EDSE), 656-675 (HKKS…TELA), and 729-754 (RLEE…KNVS). Polar residues predominate over residues 316–339 (TSANDSEQQSMSSDADTMSLTDSS). An interaction with GSK3B region spans residues 348 to 433 (LRKHYRREMQ…DGDVSSGPSV (86 aa)). Residues 434–508 (ISHKLPSGPP…RSPDGHLSKT (75 aa)) are interaction with beta-catenin. Over residues 543–552 (YHHVHHHGGV) the composition is skewed to basic residues. Positions 615–626 (KKADLGKSESAS) are enriched in basic and acidic residues. A DIX domain is found at 760 to 842 (CDNIVVAYYF…KIIGQVEKID (83 aa)).

As to quaternary structure, homodimer. Interacts with hwa; leading to promote the tankyrase-mediated degradation of axin1. ADP-ribosylated by tankyrase tnks and tnks2. Poly-ADP-ribosylated protein is recognized by rnf146, followed by ubiquitination at 'Lys-48' and subsequent activation of the Wnt signaling pathway. In terms of processing, ubiquitinated by rnf146 when poly-ADP-ribosylated, leading to its degradation and subsequent activation of the Wnt signaling pathway.

It localises to the cytoplasm. The protein localises to the nucleus. The protein resides in the membrane. It is found in the cell membrane. Component of the beta-catenin destruction complex required for regulating ctnnb1 levels through phosphorylation and ubiquitination, and modulating Wnt-signaling. Controls dorsoventral patterning via two opposing effects; down-regulates ctnnb1 to inhibit the Wnt signaling pathway and ventralize embryos, but also dorsalizes embryos by activating a Wnt-independent JNK signaling pathway. In Xenopus laevis (African clawed frog), this protein is Axin-1 (axin1).